Here is a 422-residue protein sequence, read N- to C-terminus: Adenylosuccinate synthetase (422 aa).

Residues 11–17 (GDEGKGK) and 39–41 (GHT) each bind GTP. The Proton acceptor role is filled by D12. 2 residues coordinate Mg(2+): D12 and G39. IMP-binding positions include 12–15 (DEGK), 37–40 (NAGH), T129, R143, N219, T234, and R298. H40 (proton donor) is an active-site residue. 294–300 (VTTGRRR) lines the substrate pocket. Residues R300, 326 to 328 (KLD), and 409 to 411 (GTG) each bind GTP.

It belongs to the adenylosuccinate synthetase family. Homodimer. The cofactor is Mg(2+).

Its subcellular location is the cytoplasm. It carries out the reaction IMP + L-aspartate + GTP = N(6)-(1,2-dicarboxyethyl)-AMP + GDP + phosphate + 2 H(+). Its pathway is purine metabolism; AMP biosynthesis via de novo pathway; AMP from IMP: step 1/2. Its function is as follows. Plays an important role in the de novo pathway and in the salvage pathway of purine nucleotide biosynthesis. Catalyzes the first committed step in the biosynthesis of AMP from IMP. The polypeptide is Adenylosuccinate synthetase (Blastomyces gilchristii (strain SLH14081) (Blastomyces dermatitidis)).